The sequence spans 595 residues: Transketolase-like protein 1 (595 aa).

Thiamine diphosphate is bound at residue 93-95 (GWP). The Mg(2+) site is built by Asp125, Asn155, and Ile157. Asn155 lines the thiamine diphosphate pocket. Lys217, Glu339, and Phe365 together coordinate thiamine diphosphate. The Proton donor role is filled by Glu339. His389 and Asp397 together coordinate substrate. A thiamine diphosphate-binding site is contributed by His401.

Belongs to the transketolase family. As to quaternary structure, homodimer. The cofactor is Mg(2+). Ca(2+) is required as a cofactor. It depends on Mn(2+) as a cofactor. Requires Co(2+) as cofactor. Thiamine diphosphate serves as cofactor. In terms of tissue distribution, not expressed in the embryonic neocortex.

It is found in the cytoplasm. The enzyme catalyses D-sedoheptulose 7-phosphate + D-glyceraldehyde 3-phosphate = aldehydo-D-ribose 5-phosphate + D-xylulose 5-phosphate. In terms of biological role, catalyzes the transfer of a two-carbon ketol group from a ketose donor to an aldose acceptor, via a covalent intermediate with the cofactor thiamine pyrophosphate. The sequence is that of Transketolase-like protein 1 from Mus musculus (Mouse).